Reading from the N-terminus, the 372-residue chain is Queuine tRNA-ribosyltransferase (372 aa).

The active-site Proton acceptor is the D92. Substrate-binding positions include 92–96 (DSGGY), D146, Q188, and G215. An RNA binding region spans residues 246–252 (GIGSLRE). D265 (nucleophile) is an active-site residue. Positions 270–274 (TRLGR) are RNA binding; important for wobble base 34 recognition. Positions 303, 305, 308, and 334 each coordinate Zn(2+).

This sequence belongs to the queuine tRNA-ribosyltransferase family. In terms of assembly, homodimer. Within each dimer, one monomer is responsible for RNA recognition and catalysis, while the other monomer binds to the replacement base PreQ1. Requires Zn(2+) as cofactor.

The catalysed reaction is 7-aminomethyl-7-carbaguanine + guanosine(34) in tRNA = 7-aminomethyl-7-carbaguanosine(34) in tRNA + guanine. Its pathway is tRNA modification; tRNA-queuosine biosynthesis. Functionally, catalyzes the base-exchange of a guanine (G) residue with the queuine precursor 7-aminomethyl-7-deazaguanine (PreQ1) at position 34 (anticodon wobble position) in tRNAs with GU(N) anticodons (tRNA-Asp, -Asn, -His and -Tyr). Catalysis occurs through a double-displacement mechanism. The nucleophile active site attacks the C1' of nucleotide 34 to detach the guanine base from the RNA, forming a covalent enzyme-RNA intermediate. The proton acceptor active site deprotonates the incoming PreQ1, allowing a nucleophilic attack on the C1' of the ribose to form the product. After dissociation, two additional enzymatic reactions on the tRNA convert PreQ1 to queuine (Q), resulting in the hypermodified nucleoside queuosine (7-(((4,5-cis-dihydroxy-2-cyclopenten-1-yl)amino)methyl)-7-deazaguanosine). The protein is Queuine tRNA-ribosyltransferase of Prochlorococcus marinus subsp. pastoris (strain CCMP1986 / NIES-2087 / MED4).